We begin with the raw amino-acid sequence, 254 residues long: MVIANSNIIFVAGLGGIGLDTSREIVKSGPKNLVVLDRVDNPAAIAELKALNPKVTVTFYPYDVTVPVAETKKLLKTIFDELKTVDLLINGAGILDDNQIERTIAVNFTGTVNTTTAIMDFWDKRKGGPGGVIANICSVTGFNSIYQVPVYSASKAAALSFTTSLAKLAHITGVTAYSINPGITKTVLVHKFNSWLSVEPRVAELLLEHPTQTTLQCAQNFVKAIEANQNGAIWKLDLGRLDAIEWTKHWDSGI.

Position 10 to 33 (10 to 33 (FVAGLGGIGLDTSREIVKSGPKNL)) interacts with NAD(+). Substrate is bound at residue Ser138. Tyr151 acts as the Proton acceptor in catalysis.

The protein belongs to the short-chain dehydrogenases/reductases (SDR) family. Homodimer.

The enzyme catalyses a primary alcohol + NAD(+) = an aldehyde + NADH + H(+). It carries out the reaction a secondary alcohol + NAD(+) = a ketone + NADH + H(+). The sequence is that of Alcohol dehydrogenase (Adh) from Drosophila differens (Fruit fly).